Reading from the N-terminus, the 730-residue chain is ABC transporter G family member 3 (730 aa).

Residues 1–28 are compositionally biased toward low complexity; it reads MEEIQSQSDLYRSSSSSASSPTSRVPSS. The disordered stretch occupies residues 1–100; that stretch reads MEEIQSQSDL…MASPPVPEGG (100 aa). Residues 47 to 56 show a composition bias toward acidic residues; sequence DSPEWEDTPD. Positions 72–91 are enriched in polar residues; it reads NDATTTPVSPSLSKMNSGSM. At Ser-93 the chain carries Phosphoserine. Positions 114-356 constitute an ABC transporter domain; sequence IAWKDLTVTM…FSNAGFPCPI (243 aa). 151–158 provides a ligand contact to ATP; sequence GPAKSGKS. The region spanning 441–653 is the ABC transmembrane type-2 domain; that stretch reads TRVAVLTWRS…SIEGLLENEY (213 aa). Transmembrane regions (helical) follow at residues 465 to 485, 495 to 515, 532 to 552, 575 to 595, 600 to 620, and 689 to 709; these read LILYMILTLSIGTLYSGLGHS, AVFVFVSFASLLGIAGIPSLL, AFVFLLGQFLGSIPFLFLMSI, VLNFFMCLLVNEGLMLFIACI, YWSTLTLISVHVIMMLAAGHF, and MLVLLAMAFGYRLLVYVLLRF.

It belongs to the ABC transporter superfamily. ABCG family. Eye pigment precursor importer (TC 3.A.1.204) subfamily.

Its subcellular location is the membrane. This Arabidopsis thaliana (Mouse-ear cress) protein is ABC transporter G family member 3 (ABCG3).